The primary structure comprises 70 residues: Aurein-3.1 (70 aa).

Residues 1 to 22 (MAFLKKSLFLVLFLGLVSLSIC) form the signal peptide. The propeptide occupies 23-49 (EKEKRQNEEDEDENEAANHEEGSEEKR). The tract at residues 27–48 (RQNEEDEDENEAANHEEGSEEK) is disordered. Positions 38-48 (AANHEEGSEEK) are enriched in basic and acidic residues. Position 66 is an isoleucine amide (Ile66).

Expressed by the skin dorsal glands.

It is found in the secreted. The protein localises to the target cell membrane. In terms of biological role, amphipathic alpha-helical antimicrobial peptide with weak to potent activity against Gram-positive bacteria, and no activity against Gram-negative bacteria. Probably acts by disturbing membrane functions with its amphipathic structure. Shows anticancer activity. In Ranoidea aurea (Green and golden bell frog), this protein is Aurein-3.1.